We begin with the raw amino-acid sequence, 1119 residues long: DNA-directed RNA polymerase subunit beta (1119 aa).

This sequence belongs to the RNA polymerase beta chain family. The RNAP catalytic core consists of 2 alpha, 1 beta, 1 beta' and 1 omega subunit. When a sigma factor is associated with the core the holoenzyme is formed, which can initiate transcription.

It carries out the reaction RNA(n) + a ribonucleoside 5'-triphosphate = RNA(n+1) + diphosphate. Its function is as follows. DNA-dependent RNA polymerase catalyzes the transcription of DNA into RNA using the four ribonucleoside triphosphates as substrates. This is DNA-directed RNA polymerase subunit beta from Thermus aquaticus.